We begin with the raw amino-acid sequence, 524 residues long: Alanine aminotransferase 2 (524 aa).

Lys342 bears the N6-(pyridoxal phosphate)lysine mark.

Belongs to the class-I pyridoxal-phosphate-dependent aminotransferase family. Alanine aminotransferase subfamily. As to quaternary structure, homodimer. Pyridoxal 5'-phosphate serves as cofactor.

It carries out the reaction L-alanine + 2-oxoglutarate = pyruvate + L-glutamate. It participates in amino-acid degradation; L-alanine degradation via transaminase pathway; pyruvate from L-alanine: step 1/1. Its function is as follows. Catalyzes the reversible transamination between alanine and 2-oxoglutarate to form pyruvate and glutamate. The protein is Alanine aminotransferase 2 (gpt2) of Xenopus tropicalis (Western clawed frog).